The following is a 380-amino-acid chain: MAPNIRKSHPLLKMVNNSLIDLPTPSNISAWWNFGSLLGICLVTQILTGLLLAMHYTADTNLAFSSVSHTCRNVQYGWLIRNLHANGASLFFICIYMHIGRGIYYGSYLYKETWNTGIILLLTLMATAFVGYVLPWGQMSFWGATVITNLFSAIPYIGQTLVEWAWGGFSVDNPTLTRFFALHFLLPFLIAGLTLIHLTFLHESGSNNPLGITSNCDKIPFHPYFSSKDILGFMLLYFLLTTLALFSPNLLGDPENFTPANPLVTPPHIKPEWYFLFAYAILRSIPNKLGGVLALAASILILFLSPFLHKSKQRTMTFRPLSQMLFWLLVTNLLILTWIGSQPVEHPFIIIGQLASLTYFTILLILLPLTGALENKILNY.

A run of 4 helical transmembrane segments spans residues 34-54 (FGSL…LLAM), 78-99 (WLIR…YMHI), 114-134 (WNTG…GYVL), and 179-199 (FFAL…IHLT). The heme b site is built by H84 and H98. 2 residues coordinate heme b: H183 and H197. H202 serves as a coordination point for a ubiquinone. 4 helical membrane passes run 227–247 (SKDI…ALFS), 289–309 (LGGV…PFLH), 321–341 (LSQM…WIGS), and 348–368 (FIII…ILLP).

The protein belongs to the cytochrome b family. In terms of assembly, the cytochrome bc1 complex contains 11 subunits: 3 respiratory subunits (MT-CYB, CYC1 and UQCRFS1), 2 core proteins (UQCRC1 and UQCRC2) and 6 low-molecular weight proteins (UQCRH/QCR6, UQCRB/QCR7, UQCRQ/QCR8, UQCR10/QCR9, UQCR11/QCR10 and a cleavage product of UQCRFS1). This cytochrome bc1 complex then forms a dimer. The cofactor is heme b.

It is found in the mitochondrion inner membrane. Functionally, component of the ubiquinol-cytochrome c reductase complex (complex III or cytochrome b-c1 complex) that is part of the mitochondrial respiratory chain. The b-c1 complex mediates electron transfer from ubiquinol to cytochrome c. Contributes to the generation of a proton gradient across the mitochondrial membrane that is then used for ATP synthesis. This Caracara plancus (Southern caracara) protein is Cytochrome b (MT-CYB).